We begin with the raw amino-acid sequence, 145 residues long: Methyl-coenzyme M reductase I operon protein D (145 aa).

MCR is composed of three subunits: alpha, beta, and gamma. The function of proteins C and D is not known.

The protein is Methyl-coenzyme M reductase I operon protein D (mcrD) of Methanothermobacter thermautotrophicus (strain ATCC 29096 / DSM 1053 / JCM 10044 / NBRC 100330 / Delta H) (Methanobacterium thermoautotrophicum).